The primary structure comprises 442 residues: D-serine dehydratase 1 (442 aa).

At Lys118 the chain carries N6-(pyridoxal phosphate)lysine.

This sequence belongs to the serine/threonine dehydratase family. DsdA subfamily. In terms of assembly, monomer. Pyridoxal 5'-phosphate is required as a cofactor.

The enzyme catalyses D-serine = pyruvate + NH4(+). The sequence is that of D-serine dehydratase 1 from Escherichia coli O6:K15:H31 (strain 536 / UPEC).